The primary structure comprises 210 residues: Ovomucoid (210 aa).

An N-terminal signal peptide occupies residues 1–24 (MAMAGVFVLFSFVLCGFLPDAAFG). 3 consecutive Kazal-like domains span residues 25–88 (AEVD…ECKE), 89–153 (TVPM…GCRK), and 156–210 (AAVS…FGKC). Disulfide bonds link Cys29–Cys68, Cys46–Cys65, and Cys54–Cys86. N-linked (GlcNAc...) asparagine glycosylation is present at Asn34. 3 N-linked (GlcNAc...) asparagine glycosylation sites follow: Asn77, Asn93, and Asn99. 6 disulfide bridges follow: Cys94/Cys133, Cys111/Cys130, Cys119/Cys151, Cys162/Cys192, Cys170/Cys189, and Cys178/Cys210. Asn199 carries N-linked (GlcNAc...) asparagine; partial glycosylation.

It is found in the secreted. In terms of biological role, serine protease inhibitor. Inhibits trypsin. The chain is Ovomucoid from Gallus gallus (Chicken).